The sequence spans 472 residues: Ras-GEF domain-containing family member 1B (472 aa).

Residues 34-164 form the N-terminal Ras-GEF domain; the sequence is HDNNLLSGSL…MIQCLIRKLA (131 aa). A Ras-GEF domain is found at 204-452; it reads DPYTLAQQLT…YLASYESEGP (249 aa).

As to quaternary structure, interacts with CCDC124 during cytokinesis. Interacts with Ras family proteins.

The protein localises to the early endosome. It localises to the late endosome. Its subcellular location is the midbody. Functionally, guanine nucleotide exchange factor (GEF) with specificity for RAP2A, it doesn't seems to activate other Ras family proteins (in vitro). The protein is Ras-GEF domain-containing family member 1B (RASGEF1B) of Bos taurus (Bovine).